The following is a 151-amino-acid chain: Deoxyuridine 5'-triphosphate nucleotidohydrolase (151 aa).

Substrate-binding positions include 70-72, asparagine 83, 87-89, and methionine 97; these read RSG and LID.

The protein belongs to the dUTPase family. It depends on Mg(2+) as a cofactor.

It catalyses the reaction dUTP + H2O = dUMP + diphosphate + H(+). Its pathway is pyrimidine metabolism; dUMP biosynthesis; dUMP from dCTP (dUTP route): step 2/2. This enzyme is involved in nucleotide metabolism: it produces dUMP, the immediate precursor of thymidine nucleotides and it decreases the intracellular concentration of dUTP so that uracil cannot be incorporated into DNA. The protein is Deoxyuridine 5'-triphosphate nucleotidohydrolase of Shigella sonnei (strain Ss046).